We begin with the raw amino-acid sequence, 433 residues long: tRNA(Ile)-lysidine synthase (433 aa).

ATP is bound at residue 27-32 (SGGLDS).

The protein belongs to the tRNA(Ile)-lysidine synthase family.

Its subcellular location is the cytoplasm. It catalyses the reaction cytidine(34) in tRNA(Ile2) + L-lysine + ATP = lysidine(34) in tRNA(Ile2) + AMP + diphosphate + H(+). Functionally, ligates lysine onto the cytidine present at position 34 of the AUA codon-specific tRNA(Ile) that contains the anticodon CAU, in an ATP-dependent manner. Cytidine is converted to lysidine, thus changing the amino acid specificity of the tRNA from methionine to isoleucine. This Legionella pneumophila subsp. pneumophila (strain Philadelphia 1 / ATCC 33152 / DSM 7513) protein is tRNA(Ile)-lysidine synthase.